Consider the following 500-residue polypeptide: Lysine--tRNA ligase (500 aa).

Positions 410 and 417 each coordinate Mg(2+).

Belongs to the class-II aminoacyl-tRNA synthetase family. In terms of assembly, homodimer. It depends on Mg(2+) as a cofactor.

Its subcellular location is the cytoplasm. The enzyme catalyses tRNA(Lys) + L-lysine + ATP = L-lysyl-tRNA(Lys) + AMP + diphosphate. The polypeptide is Lysine--tRNA ligase (Shewanella putrefaciens (strain CN-32 / ATCC BAA-453)).